Here is a 1760-residue protein sequence, read N- to C-terminus: Chitin synthase csmB (1760 aa).

Low complexity predominate over residues 1 to 17 (MSNRFSVYSSHSTGVSS). Positions 1–23 (MSNRFSVYSSHSTGVSSARPSAP) are disordered. Positions 1-374 (MSNRFSVYSS…TVSITVVDIP (374 aa)) constitute a Myosin motor domain. The N-linked (GlcNAc...) asparagine glycan is linked to Asn-275. Residues 344–363 (LDNDPSTSGGSGPGGQWTDD) are disordered. A region of interest (actin-binding) is located at residue Pro-374. 2 helical membrane-spanning segments follow: residues 731 to 751 (IWVGFVWALTFWIPSFALRWI) and 767 to 787 (LVLMLIILLFNGVVCFYIIAF). Asn-878, Asn-906, and Asn-995 each carry an N-linked (GlcNAc...) asparagine glycan. Residues 1029–1049 (ILLSFTVLICAVILVKFVSAL) traverse the membrane as a helical segment. An N-linked (GlcNAc...) asparagine glycan is attached at Asn-1394. The next 3 helical transmembrane spans lie at 1419–1439 (FVVLVDLLGTVILPATCVYLG), 1452–1472 (FPMISIVILAGVYGLQAIIFL), and 1480–1500 (IGWMIIYICAYPIYNFILPLY). N-linked (GlcNAc...) asparagine glycans are attached at residues Asn-1584 and Asn-1652. A DEK-C domain is found at 1702–1758 (GPDEGAITEAIRACLAEVDLDTVTKKQVRALVEQRLQTTLMGDKRTFLDRQIDHELA).

In the N-terminal section; belongs to the TRAFAC class myosin-kinesin ATPase superfamily. Myosin family. It in the C-terminal section; belongs to the chitin synthase family. Class V subfamily.

Its subcellular location is the cell membrane. The protein localises to the cell septum. The protein resides in the cell tip. It catalyses the reaction [(1-&gt;4)-N-acetyl-beta-D-glucosaminyl](n) + UDP-N-acetyl-alpha-D-glucosamine = [(1-&gt;4)-N-acetyl-beta-D-glucosaminyl](n+1) + UDP + H(+). Its function is as follows. Polymerizes chitin, a structural polymer of the cell wall and septum, by transferring the sugar moiety of UDP-GlcNAc to the non-reducing end of the growing chitin polymer. Plays an important role in septal growth or maintenance. Mediates colony spore formation. In Aspergillus niger (strain ATCC MYA-4892 / CBS 513.88 / FGSC A1513), this protein is Chitin synthase csmB.